The sequence spans 183 residues: Proton-transporting V-type ATPase complex assembly regulator TMEM9 (183 aa).

Residues 1 to 20 (MKLLCLVAVVGCLLVPPAQA) form the signal peptide. Residues N21, N38, and N47 are each glycosylated (N-linked (GlcNAc...) asparagine). Over 21 to 89 (NKSSEDIRCK…YEERSTTTIK (69 aa)) the chain is Extracellular. A helical membrane pass occupies residues 90-110 (VIIVIYLSVVGALLLYMAFLM). Over 111–183 (LVDPLIRKPD…TVFDRHKMLS (73 aa)) the chain is Cytoplasmic. S144 is subject to Phosphoserine.

It belongs to the TMEM9 family. Interacts with the v-ATPase accessory protein ATP6AP2 and with the v-ATPase complex subunit ATP6V0D1; these interactions lead to the assembly of the v-ATPase complex. Post-translationally, N-glycosylated. Expressed in heart, lung, kidney, liver and intestines. Enriched in the hepatocytes around the central vein.

The protein resides in the lysosome membrane. The protein localises to the late endosome membrane. It localises to the endosome. It is found in the multivesicular body membrane. In terms of biological role, transmembrane protein that binds to and facilitates the assembly of lysosomal proton-transporting V-type ATPase (v-ATPase), resulting in enhanced lysosomal acidification and trafficking. By bringing the v-ATPase accessory protein ATP6AP2 and the v-ATPase subunit ATP6V0D1 together, allows v-ATPase complex formation and activation. TMEM9-controlled vesicular acidification induces hyperactivation of Wnt/beta-catenin signaling, involved in development, tissue homeostasis and tissue regeneration, through lysosomal degradation of adenomatous polyposis coli/APC. In the liver, involved in hepatic regeneration. The protein is Proton-transporting V-type ATPase complex assembly regulator TMEM9 of Mus musculus (Mouse).